A 511-amino-acid polypeptide reads, in one-letter code: Histidine ammonia-lyase (511 aa).

The 5-imidazolinone (Ala-Gly) cross-link spans 142 to 144 (ASG). 2,3-didehydroalanine (Ser) is present on S143.

It belongs to the PAL/histidase family. In terms of processing, contains an active site 4-methylidene-imidazol-5-one (MIO), which is formed autocatalytically by cyclization and dehydration of residues Ala-Ser-Gly.

It localises to the cytoplasm. It carries out the reaction L-histidine = trans-urocanate + NH4(+). The protein operates within amino-acid degradation; L-histidine degradation into L-glutamate; N-formimidoyl-L-glutamate from L-histidine: step 1/3. This is Histidine ammonia-lyase from Brucella anthropi (strain ATCC 49188 / DSM 6882 / CCUG 24695 / JCM 21032 / LMG 3331 / NBRC 15819 / NCTC 12168 / Alc 37) (Ochrobactrum anthropi).